The chain runs to 558 residues: Glutamine--tRNA ligase (558 aa).

The 'HIGH' region motif lies at 34–44; sequence PEPNGYLHIGH. Residues 35–37 and 41–47 each bind ATP; these read EPN and HIGHAKS. L-glutamine is bound by residues Asp-67 and Tyr-212. Residues Thr-231, 261–262, and 269–271 contribute to the ATP site; these read RL and LSK. Positions 268-272 match the 'KMSKS' region motif; that stretch reads VLSKR.

The protein belongs to the class-I aminoacyl-tRNA synthetase family. As to quaternary structure, monomer.

Its subcellular location is the cytoplasm. The catalysed reaction is tRNA(Gln) + L-glutamine + ATP = L-glutaminyl-tRNA(Gln) + AMP + diphosphate. In Pseudoalteromonas atlantica (strain T6c / ATCC BAA-1087), this protein is Glutamine--tRNA ligase.